We begin with the raw amino-acid sequence, 85 residues long: Putative membrane protein insertion efficiency factor (85 aa).

It belongs to the UPF0161 family.

It localises to the cell inner membrane. Its function is as follows. Could be involved in insertion of integral membrane proteins into the membrane. This chain is Putative membrane protein insertion efficiency factor, found in Vibrio atlanticus (strain LGP32) (Vibrio splendidus (strain Mel32)).